Reading from the N-terminus, the 202-residue chain is Translation initiation factor IF-3 (202 aa).

The disordered stretch occupies residues 172 to 202 (KTRASARHPEVPGAGSVQDIDATGDTDGSPH).

This sequence belongs to the IF-3 family. Monomer.

The protein localises to the cytoplasm. In terms of biological role, IF-3 binds to the 30S ribosomal subunit and shifts the equilibrium between 70S ribosomes and their 50S and 30S subunits in favor of the free subunits, thus enhancing the availability of 30S subunits on which protein synthesis initiation begins. The sequence is that of Translation initiation factor IF-3 from Mycobacterium leprae (strain TN).